The sequence spans 337 residues: uncharacterized protein (337 aa).

2 helical membrane passes run 4-24 (FIFFFKNYCYISGSMLLFSLI) and 26-46 (LLLWIISLYCVGLVFWILFVL).

Belongs to the plectrovirus ORF2 family.

It is found in the host membrane. This is an uncharacterized protein from Spiroplasma virus SpV1-R8A2 B (SpV1).